Here is a 214-residue protein sequence, read N- to C-terminus: Probable maleylacetoacetate isomerase (214 aa).

A GST N-terminal domain is found at 4–84; the sequence is QKPVLYSYWR…YLEETHPDVP (81 aa). Glutathione contacts are provided by residues 14 to 19, Val-56, 68 to 69, Gln-108, and 112 to 114; these read SSCSWR, ES, and NLK. Residues 89–212 enclose the GST C-terminal domain; that stretch reads DPIKRAHARA…HPDNQPDTGL (124 aa).

The protein belongs to the GST superfamily. Zeta family. Glutathione is required as a cofactor.

Its subcellular location is the cytoplasm. The catalysed reaction is 4-maleylacetoacetate = 4-fumarylacetoacetate. Its pathway is amino-acid degradation; L-phenylalanine degradation; acetoacetate and fumarate from L-phenylalanine: step 5/6. The sequence is that of Probable maleylacetoacetate isomerase (gst-42) from Caenorhabditis elegans.